A 61-amino-acid polypeptide reads, in one-letter code: Cobrotoxin-b (61 aa).

4 cysteine pairs are disulfide-bonded: C3-C23, C17-C40, C42-C53, and C54-C59.

It belongs to the three-finger toxin family. Short-chain subfamily. Type I alpha-neurotoxin sub-subfamily. Expressed by the venom gland.

It localises to the secreted. Produces peripheral paralysis by blocking neuromuscular transmission at the postsynaptic site. Binds to the nicotinic acetylcholine receptor. The sequence is that of Cobrotoxin-b from Naja kaouthia (Monocled cobra).